The chain runs to 205 residues: N-(5'-phosphoribosyl)anthranilate isomerase (205 aa).

Belongs to the TrpF family.

It catalyses the reaction N-(5-phospho-beta-D-ribosyl)anthranilate = 1-(2-carboxyphenylamino)-1-deoxy-D-ribulose 5-phosphate. The protein operates within amino-acid biosynthesis; L-tryptophan biosynthesis; L-tryptophan from chorismate: step 3/5. In Phocaeicola vulgatus (strain ATCC 8482 / DSM 1447 / JCM 5826 / CCUG 4940 / NBRC 14291 / NCTC 11154) (Bacteroides vulgatus), this protein is N-(5'-phosphoribosyl)anthranilate isomerase.